The sequence spans 360 residues: MNRLGELWVLTTFGESHGAGIGCVLDGVPAGLRVDEEFLNLELSRRRPGQSLYSTPRKESDRVEILSGVMEGFTTGTPLAMFIPNENQKSSDYESIRSIFRPGHADFTYHYKYGLRDHRGGGRSSARETAARVAGGAVAKMFLKELGISIFSGVFQVGEHTSDVRDFAHARKSVVNALDPLMEELFKEEIEKARGAHDSIGGAIEVRAKGMPIGLGEPLYHKLDGALGGALMGLNAVKAVEIGEGLSAARLKGSENNDPLRLEGFKSNHAGGILGGISNGSELVARVYFKPTPSIFLPQETLNEEGDEVICALKGRHDPCVAIRGGVVCEALVALVLADMALLRLGNRLQDVKEFYGKGR.

Arg46 contacts NADP(+). FMN contacts are provided by residues Arg123–Ser125, Asn235–Ala236, Gly275, Lys290–Ser294, and Arg316.

Belongs to the chorismate synthase family. In terms of assembly, homotetramer. Requires FMNH2 as cofactor.

The catalysed reaction is 5-O-(1-carboxyvinyl)-3-phosphoshikimate = chorismate + phosphate. The protein operates within metabolic intermediate biosynthesis; chorismate biosynthesis; chorismate from D-erythrose 4-phosphate and phosphoenolpyruvate: step 7/7. In terms of biological role, catalyzes the anti-1,4-elimination of the C-3 phosphate and the C-6 proR hydrogen from 5-enolpyruvylshikimate-3-phosphate (EPSP) to yield chorismate, which is the branch point compound that serves as the starting substrate for the three terminal pathways of aromatic amino acid biosynthesis. This reaction introduces a second double bond into the aromatic ring system. This Wolinella succinogenes (strain ATCC 29543 / DSM 1740 / CCUG 13145 / JCM 31913 / LMG 7466 / NCTC 11488 / FDC 602W) (Vibrio succinogenes) protein is Chorismate synthase.